The chain runs to 423 residues: 3-phosphoshikimate 1-carboxyvinyltransferase (423 aa).

Positions 21, 22, and 26 each coordinate 3-phosphoshikimate. Residue Lys-21 coordinates phosphoenolpyruvate. The phosphoenolpyruvate site is built by Gly-93 and Arg-123. 3-phosphoshikimate-binding residues include Ser-168, Ser-169, Gln-170, Ser-196, Asp-311, and Lys-338. Gln-170 is a binding site for phosphoenolpyruvate. The active-site Proton acceptor is Asp-311. Residues Arg-342, Arg-383, and Lys-408 each coordinate phosphoenolpyruvate.

It belongs to the EPSP synthase family. Monomer.

The protein localises to the cytoplasm. It carries out the reaction 3-phosphoshikimate + phosphoenolpyruvate = 5-O-(1-carboxyvinyl)-3-phosphoshikimate + phosphate. The protein operates within metabolic intermediate biosynthesis; chorismate biosynthesis. In terms of biological role, catalyzes the transfer of the enolpyruvyl moiety of phosphoenolpyruvate (PEP) to the 5-hydroxyl of shikimate-3-phosphate (S3P) to produce enolpyruvyl shikimate-3-phosphate and inorganic phosphate. The protein is 3-phosphoshikimate 1-carboxyvinyltransferase of Methanosphaerula palustris (strain ATCC BAA-1556 / DSM 19958 / E1-9c).